We begin with the raw amino-acid sequence, 209 residues long: Potassium-transporting ATPase KdpC subunit (209 aa).

A helical membrane pass occupies residues 18 to 38; the sequence is ALALFVLLGLGLGYSLVATGI.

It belongs to the KdpC family. In terms of assembly, the system is composed of three essential subunits: KdpA, KdpB and KdpC.

It localises to the cell inner membrane. Functionally, part of the high-affinity ATP-driven potassium transport (or Kdp) system, which catalyzes the hydrolysis of ATP coupled with the electrogenic transport of potassium into the cytoplasm. This subunit acts as a catalytic chaperone that increases the ATP-binding affinity of the ATP-hydrolyzing subunit KdpB by the formation of a transient KdpB/KdpC/ATP ternary complex. This is Potassium-transporting ATPase KdpC subunit from Xanthomonas campestris pv. campestris (strain 8004).